The primary structure comprises 437 residues: Homogentisate 1,2-dioxygenase (437 aa).

The active-site Proton acceptor is histidine 295. The Fe cation site is built by histidine 338 and glutamate 344. Homogentisate is bound by residues tyrosine 353 and histidine 374. Residue histidine 374 participates in Fe cation binding.

This sequence belongs to the homogentisate dioxygenase family. Hexamer; dimer of trimers. The cofactor is Fe cation.

It carries out the reaction homogentisate + O2 = 4-maleylacetoacetate + H(+). Its pathway is amino-acid degradation; L-phenylalanine degradation; acetoacetate and fumarate from L-phenylalanine: step 4/6. In terms of biological role, involved in the catabolism of homogentisate (2,5-dihydroxyphenylacetate or 2,5-OH-PhAc), a central intermediate in the degradation of phenylalanine and tyrosine. Catalyzes the oxidative ring cleavage of the aromatic ring of homogentisate to yield maleylacetoacetate. The chain is Homogentisate 1,2-dioxygenase from Myxococcus xanthus (strain DK1622).